The chain runs to 153 residues: Ribosome maturation factor RimP (153 aa).

It belongs to the RimP family.

The protein resides in the cytoplasm. Functionally, required for maturation of 30S ribosomal subunits. The sequence is that of Ribosome maturation factor RimP from Chromohalobacter salexigens (strain ATCC BAA-138 / DSM 3043 / CIP 106854 / NCIMB 13768 / 1H11).